Here is an 81-residue protein sequence, read N- to C-terminus: Acyl carrier protein 2 (81 aa).

The Carrier domain maps to 1-79 (MTETEILERI…DVIGAVQSLL (79 aa)). Serine 39 carries the post-translational modification O-(pantetheine 4'-phosphoryl)serine.

It belongs to the acyl carrier protein (ACP) family. In terms of processing, 4'-phosphopantetheine is transferred from CoA to a specific serine of apo-ACP by AcpS. This modification is essential for activity because fatty acids are bound in thioester linkage to the sulfhydryl of the prosthetic group.

The protein resides in the cytoplasm. Its pathway is lipid metabolism; fatty acid biosynthesis. In terms of biological role, carrier of the growing fatty acid chain in fatty acid biosynthesis. The sequence is that of Acyl carrier protein 2 from Ralstonia nicotianae (strain ATCC BAA-1114 / GMI1000) (Ralstonia solanacearum).